The sequence spans 130 residues: MAQVQYYGTGRRKSSVARVRLVPGEGRIVVNNREISEHIPSAALIEDIKQPLTLTETAGTYDVLVNVHGGGLSGQAGAIRHGIARALLEADPEYRTTLKRAGLLTRDARMKERKKYGLKGARRAPQFSKR.

The protein belongs to the universal ribosomal protein uS9 family. In terms of assembly, part of the 30S ribosomal subunit.

The sequence is that of Small ribosomal subunit protein uS9 (rpsI) from Bacillus subtilis (strain 168).